Here is an 83-residue protein sequence, read N- to C-terminus: Cytochrome b559 subunit alpha (83 aa).

The helical transmembrane segment at 21–35 (VIHSITIPSLFIAGW) threads the bilayer. His23 is a binding site for heme.

The protein belongs to the PsbE/PsbF family. Heterodimer of an alpha subunit and a beta subunit. PSII is composed of 1 copy each of membrane proteins PsbA, PsbB, PsbC, PsbD, PsbE, PsbF, PsbH, PsbI, PsbJ, PsbK, PsbL, PsbM, PsbT, PsbX, PsbY, PsbZ, Psb30/Ycf12, at least 3 peripheral proteins of the oxygen-evolving complex and a large number of cofactors. It forms dimeric complexes. The cofactor is heme b.

It is found in the plastid. The protein resides in the chloroplast thylakoid membrane. Functionally, this b-type cytochrome is tightly associated with the reaction center of photosystem II (PSII). PSII is a light-driven water:plastoquinone oxidoreductase that uses light energy to abstract electrons from H(2)O, generating O(2) and a proton gradient subsequently used for ATP formation. It consists of a core antenna complex that captures photons, and an electron transfer chain that converts photonic excitation into a charge separation. The chain is Cytochrome b559 subunit alpha from Liriodendron tulipifera (Tuliptree).